A 602-amino-acid polypeptide reads, in one-letter code: Elongation factor 4 (602 aa).

Positions 7 to 189 (DKIRNFSIVA…AIVTRLPPPK (183 aa)) constitute a tr-type G domain. Residues 19–24 (DHGKST) and 136–139 (NKVD) contribute to the GTP site.

The protein belongs to the TRAFAC class translation factor GTPase superfamily. Classic translation factor GTPase family. LepA subfamily.

Its subcellular location is the cell inner membrane. The catalysed reaction is GTP + H2O = GDP + phosphate + H(+). In terms of biological role, required for accurate and efficient protein synthesis under certain stress conditions. May act as a fidelity factor of the translation reaction, by catalyzing a one-codon backward translocation of tRNAs on improperly translocated ribosomes. Back-translocation proceeds from a post-translocation (POST) complex to a pre-translocation (PRE) complex, thus giving elongation factor G a second chance to translocate the tRNAs correctly. Binds to ribosomes in a GTP-dependent manner. This chain is Elongation factor 4, found in Caulobacter vibrioides (strain NA1000 / CB15N) (Caulobacter crescentus).